The chain runs to 605 residues: Elongation factor 4 (605 aa).

Residues 4–186 (SSVRNFCIIA…AIVNKVPAPK (183 aa)) form the tr-type G domain. Residues 16-21 (DHGKST) and 133-136 (NKID) each bind GTP.

Belongs to the TRAFAC class translation factor GTPase superfamily. Classic translation factor GTPase family. LepA subfamily.

Its subcellular location is the cell membrane. It catalyses the reaction GTP + H2O = GDP + phosphate + H(+). Required for accurate and efficient protein synthesis under certain stress conditions. May act as a fidelity factor of the translation reaction, by catalyzing a one-codon backward translocation of tRNAs on improperly translocated ribosomes. Back-translocation proceeds from a post-translocation (POST) complex to a pre-translocation (PRE) complex, thus giving elongation factor G a second chance to translocate the tRNAs correctly. Binds to ribosomes in a GTP-dependent manner. The polypeptide is Elongation factor 4 (Dehalococcoides mccartyi (strain ATCC BAA-2100 / JCM 16839 / KCTC 5957 / BAV1)).